A 136-amino-acid chain; its full sequence is Small ribosomal subunit protein eS8 (136 aa).

Belongs to the eukaryotic ribosomal protein eS8 family. In terms of assembly, part of the 30S ribosomal subunit.

In Aeropyrum pernix (strain ATCC 700893 / DSM 11879 / JCM 9820 / NBRC 100138 / K1), this protein is Small ribosomal subunit protein eS8 (rps8e).